A 96-amino-acid polypeptide reads, in one-letter code: Putative pterin-4-alpha-carbinolamine dehydratase (96 aa).

This sequence belongs to the pterin-4-alpha-carbinolamine dehydratase family.

It catalyses the reaction (4aS,6R)-4a-hydroxy-L-erythro-5,6,7,8-tetrahydrobiopterin = (6R)-L-erythro-6,7-dihydrobiopterin + H2O. The sequence is that of Putative pterin-4-alpha-carbinolamine dehydratase from Prochlorococcus marinus (strain MIT 9515).